The sequence spans 452 residues: AP-4 complex subunit mu-1 (452 aa).

Positions 184–451 (KNEVFLDVVE…LSHSDAYVIR (268 aa)) constitute an MHD domain.

Belongs to the adaptor complexes medium subunit family. As to quaternary structure, adaptor protein complex 4 (AP-4) is a heterotetramer composed of two large adaptins (epsilon-type subunit AP4E1 and beta-type subunit AP4B1), a medium adaptin (mu-type subunit AP4M1) and a small adaptin (sigma-type AP4S1). Interacts with tyrosine-based sorting signals on the cytoplasmic tail of cargo proteins such as APP, ATG9A, LAMP2 and NAGPA. Interacts with the C-terminal domain of GRID2. Interacts with GRIA1 and GRIA2; the interaction is indirect via CACNG3. Interacts with CACNG3; CACNG3 associates GRIA1 and GRIA2 with the adaptor protein complex 4 (AP-4) to target them to the somatodendritic compartment of neurons. Interacts with HOOK1 and HOOK2; the interactions are direct, mediate the interaction between FTS-Hook-FHIP (FHF) complex and AP-4 and the perinuclear distribution of AP-4.

It is found in the golgi apparatus. The protein resides in the trans-Golgi network membrane. The protein localises to the early endosome. Functionally, component of the adaptor protein complex 4 (AP-4). Adaptor protein complexes are vesicle coat components involved both in vesicle formation and cargo selection. They control the vesicular transport of proteins in different trafficking pathways. AP-4 forms a non clathrin-associated coat on vesicles departing the trans-Golgi network (TGN) and may be involved in the targeting of proteins from the trans-Golgi network (TGN) to the endosomal-lysosomal system. It is also involved in protein sorting to the basolateral membrane in epithelial cells and the proper asymmetric localization of somatodendritic proteins in neurons. Within AP-4, the mu-type subunit AP4M1 is directly involved in the recognition and binding of tyrosine-based sorting signals found in the cytoplasmic part of cargos. The adaptor protein complex 4 (AP-4) may also recognize other types of sorting signal. The protein is AP-4 complex subunit mu-1 of Bos taurus (Bovine).